The following is a 311-amino-acid chain: Oxidoreductase NAD-binding domain-containing protein 1 (311 aa).

An N-terminal signal peptide occupies residues Met1–Gly17. Positions His50–Ser186 constitute an FAD-binding FR-type domain. Gly178–Pro183 lines the NAD(+) pocket.

The polypeptide is Oxidoreductase NAD-binding domain-containing protein 1 (OXNAD1) (Pongo abelii (Sumatran orangutan)).